Here is an 896-residue protein sequence, read N- to C-terminus: MTQLTVKALSEEIGTPVDRLIEQLADAGMKKAGSDQVTDSEKQTLLTHLKKEHGDTSGETEPTRLTLQRKTRSTLSVAAGGGKSKDVQVEVRKKRTYVKRSTIEDEAKREAEEVANREAEEKAQRDAEEQAKRDAAEKAQREAEAKVTREADAKREAEEKAQRAQAEKAKKDMNSKNADANAQAKKEADELKARQEQEATRKAEAEAAKLVEEARKLAEENQERWSEEEKKKKEQEKSADYHVTTSTYAREAEDAADKKDEKAPRRRKKKPAPATQPGNNRGGRNQRGRGGKGKLAKPTSMQQGFDKSATVAKSDVAIGETIVVSELASKMSVKATEVIKVMMKMGAMATINQVIDQETAQLVAEEMGHKVILRKENELEEAVLADRDSDAIAEGRAPVVTIMGHVDHGKTSTLDYIRKAHVASGEAGGITQHIGAYHVDTDNGMITFLDTPGHAAFTAMRARGAQATDIVVLVVAADDGVMPQTIEAIQHAKAAGVPLIVAVNKIDKEGANPDNVKNELAQYDVIPEEWGGENIFVHISAKQGTNIDGLLESILLQSEVLELTAVKEGMASGVVVESRLDKGRGPVATVLVQSGTLNKGDIVLCGQEYGRVRAMRDENGKDIETAGPSIPVEILGLSGVPASGDEATVVRDERKAREVANYRQGKFRDVKLARQQKAKLENMFANMTAGEVAELNVVLKADVQGSVEAIADSLLKLSTDEVKVNIVGSGVGGITETDATLAAASNAIILGFNVRADATARNTVQNENLDLRYYSIIYQLIDEVKQAMGGMLAPEFRQEIIGLAQVRDVFKSPKLGAIAGCIVTEGTIKRSNPIRVLRENVVIYEGELESLRRFKDDVQEVKNGYECGVGVKNYNDVRVGDQIEVFEIVEVKRTLD.

Residues 49 to 310 (LKKEHGDTSG…MQQGFDKSAT (262 aa)) are disordered. A compositionally biased stretch (polar residues) spans 57 to 66 (SGETEPTRLT). 3 stretches are compositionally biased toward basic and acidic residues: residues 101 to 174 (STIE…KDMN), 184 to 240 (AKKE…KSAD), and 250 to 263 (REAE…DEKA). Residues 284–295 (RNQRGRGGKGKL) are compositionally biased toward basic residues. The tr-type G domain maps to 395-564 (GRAPVVTIMG…LLQSEVLELT (170 aa)). The interval 404-411 (GHVDHGKT) is G1. Position 404 to 411 (404 to 411 (GHVDHGKT)) interacts with GTP. Positions 429-433 (GITQH) are G2. The interval 450–453 (DTPG) is G3. GTP is bound by residues 450 to 454 (DTPGH) and 504 to 507 (NKID). The interval 504–507 (NKID) is G4. Residues 540–542 (SAK) are G5.

It belongs to the TRAFAC class translation factor GTPase superfamily. Classic translation factor GTPase family. IF-2 subfamily.

The protein localises to the cytoplasm. Functionally, one of the essential components for the initiation of protein synthesis. Protects formylmethionyl-tRNA from spontaneous hydrolysis and promotes its binding to the 30S ribosomal subunits. Also involved in the hydrolysis of GTP during the formation of the 70S ribosomal complex. The protein is Translation initiation factor IF-2 of Vibrio atlanticus (strain LGP32) (Vibrio splendidus (strain Mel32)).